Here is a 548-residue protein sequence, read N- to C-terminus: Chaperonin GroEL (548 aa).

ATP contacts are provided by residues Thr-30–Pro-33, Lys-51, Asp-87–Thr-91, Gly-415, Asn-479–Ala-481, and Asp-495.

Belongs to the chaperonin (HSP60) family. In terms of assembly, forms a cylinder of 14 subunits composed of two heptameric rings stacked back-to-back. Interacts with the co-chaperonin GroES.

The protein resides in the cytoplasm. It carries out the reaction ATP + H2O + a folded polypeptide = ADP + phosphate + an unfolded polypeptide.. Its function is as follows. Together with its co-chaperonin GroES, plays an essential role in assisting protein folding. The GroEL-GroES system forms a nano-cage that allows encapsulation of the non-native substrate proteins and provides a physical environment optimized to promote and accelerate protein folding. This Klebsiella pneumoniae (strain 342) protein is Chaperonin GroEL.